The following is an 84-amino-acid chain: Neurotoxin BmK-M10 (84 aa).

An N-terminal signal peptide occupies residues 1–19; that stretch reads MNYLVMISFALLLMKGVES. In terms of domain architecture, LCN-type CS-alpha/beta spans 21–83; the sequence is RDAYIAKPEN…VPIRVPGKCQ (63 aa). 4 disulfides stabilise this stretch: C31/C82, C35/C55, C41/C65, and C45/C67. A propeptide (removed by a carboxypeptidase) is located at residue R84.

As to expression, expressed by the venom gland.

The protein resides in the secreted. Its function is as follows. Binds to voltage-dependent sodium channels (Nav) and voltage-dependent delayed rectifier potassium channels and inhibits the inactivation of the activated channels, thereby blocking neuronal transmission. Administration to mice at a dosage of 0.8 mg/kg produces an analgesic effect. This is Neurotoxin BmK-M10 from Olivierus martensii (Manchurian scorpion).